The chain runs to 204 residues: Tetraspanin-13 (204 aa).

Residues 1-19 lie on the Cytoplasmic side of the membrane; sequence MVCGGFACSKNCLCALNLL. Residues 20 to 40 traverse the membrane as a helical segment; that stretch reads YTLVSLLLIGIAAWGIGFGLI. Topologically, residues 41–44 are extracellular; the sequence is SSLR. Residues 45 to 65 traverse the membrane as a helical segment; that stretch reads VVGVVIAVGIFLFLIALVGLI. Topologically, residues 66–72 are cytoplasmic; the sequence is GAVKHHQ. The chain crosses the membrane as a helical span at residues 73–93; sequence VLLFFYMIILLLVFIVQFSVS. The Extracellular segment spans residues 94–167; sequence CACLALNQEQ…IGRYAGEVLR (74 aa). N-linked (GlcNAc...) asparagine glycosylation is found at N113 and N137. S143 carries the phosphoserine modification. The helical transmembrane segment at 168–188 threads the bilayer; that stretch reads FVGGIGLFFSFTEILGVWLTY. Topologically, residues 189-204 are cytoplasmic; sequence RYRNQKDPRANPSAFL.

The protein belongs to the tetraspanin (TM4SF) family.

It is found in the membrane. The sequence is that of Tetraspanin-13 (TSPAN13) from Bos taurus (Bovine).